Here is a 125-residue protein sequence, read N- to C-terminus: Holo-[acyl-carrier-protein] synthase (125 aa).

The Mg(2+) site is built by aspartate 8 and glutamate 56.

It belongs to the P-Pant transferase superfamily. AcpS family. The cofactor is Mg(2+).

It localises to the cytoplasm. It carries out the reaction apo-[ACP] + CoA = holo-[ACP] + adenosine 3',5'-bisphosphate + H(+). Its function is as follows. Transfers the 4'-phosphopantetheine moiety from coenzyme A to a Ser of acyl-carrier-protein. The protein is Holo-[acyl-carrier-protein] synthase of Borrelia turicatae (strain 91E135).